A 477-amino-acid polypeptide reads, in one-letter code: Glycogen synthase (477 aa).

K15 is an ADP-alpha-D-glucose binding site.

Belongs to the glycosyltransferase 1 family. Bacterial/plant glycogen synthase subfamily.

It catalyses the reaction [(1-&gt;4)-alpha-D-glucosyl](n) + ADP-alpha-D-glucose = [(1-&gt;4)-alpha-D-glucosyl](n+1) + ADP + H(+). The protein operates within glycan biosynthesis; glycogen biosynthesis. Its function is as follows. Synthesizes alpha-1,4-glucan chains using ADP-glucose. The sequence is that of Glycogen synthase from Edwardsiella ictaluri (strain 93-146).